The sequence spans 343 residues: tRNA N6-adenosine threonylcarbamoyltransferase (343 aa).

Fe cation contacts are provided by His108 and His112. Substrate is bound by residues 129 to 133, Asp161, Glu178, and Ser258; that span reads LISGG. A Fe cation-binding site is contributed by Asp286.

Belongs to the KAE1 / TsaD family. The cofactor is Fe(2+).

It is found in the cytoplasm. The enzyme catalyses L-threonylcarbamoyladenylate + adenosine(37) in tRNA = N(6)-L-threonylcarbamoyladenosine(37) in tRNA + AMP + H(+). Its function is as follows. Required for the formation of a threonylcarbamoyl group on adenosine at position 37 (t(6)A37) in tRNAs that read codons beginning with adenine. Is probably involved in the transfer of the threonylcarbamoyl moiety of threonylcarbamoyl-AMP (TC-AMP) to the N6 group of A37. This chain is tRNA N6-adenosine threonylcarbamoyltransferase, found in Pyrobaculum aerophilum (strain ATCC 51768 / DSM 7523 / JCM 9630 / CIP 104966 / NBRC 100827 / IM2).